A 453-amino-acid polypeptide reads, in one-letter code: 3-phosphoshikimate 1-carboxyvinyltransferase (453 aa).

Positions Met1–Gly12 are enriched in polar residues. The disordered stretch occupies residues Met1–Ser21. Positions 20, 21, and 25 each coordinate 3-phosphoshikimate. Lys20 is a binding site for phosphoenolpyruvate. Residues Gly97 and Arg125 each contribute to the phosphoenolpyruvate site. Residues Ser170, Ser171, Gln172, Ser198, Asp330, and Lys357 each contribute to the 3-phosphoshikimate site. Phosphoenolpyruvate is bound at residue Gln172. Asp330 serves as the catalytic Proton acceptor. Arg361 and Arg404 together coordinate phosphoenolpyruvate.

It belongs to the EPSP synthase family. Monomer.

The protein resides in the cytoplasm. The enzyme catalyses 3-phosphoshikimate + phosphoenolpyruvate = 5-O-(1-carboxyvinyl)-3-phosphoshikimate + phosphate. It functions in the pathway metabolic intermediate biosynthesis; chorismate biosynthesis. Its function is as follows. Catalyzes the transfer of the enolpyruvyl moiety of phosphoenolpyruvate (PEP) to the 5-hydroxyl of shikimate-3-phosphate (S3P) to produce enolpyruvyl shikimate-3-phosphate and inorganic phosphate. The chain is 3-phosphoshikimate 1-carboxyvinyltransferase from Halorubrum lacusprofundi (strain ATCC 49239 / DSM 5036 / JCM 8891 / ACAM 34).